A 527-amino-acid chain; its full sequence is Catalase (527 aa).

A compositionally biased stretch (basic and acidic residues) spans M1–Q22. The interval M1–G32 is disordered. N-acetylalanine is present on A2. At S9 the chain carries Phosphoserine. N6-succinyllysine is present on K13. Active-site residues include H75 and N148. Residues H194, S201, R203, and N213 each contribute to the NADP(+) site. The residue at position 221 (K221) is an N6-succinyllysine. At K233 the chain carries N6-acetyllysine. Residues K237, W303, and H305 each contribute to the NADP(+) site. Residue Y358 participates in heme binding. 2 positions are modified to phosphoserine: S417 and S434. N6-acetyllysine; alternate is present on K480. At K480 the chain carries N6-succinyllysine; alternate. The residue at position 499 (K499) is an N6-acetyllysine. T511 bears the Phosphothreonine mark. A Phosphoserine modification is found at S517. A Microbody targeting signal; atypical motif is present at residues K524–L527.

This sequence belongs to the catalase family. Homotetramer. Interacts (via microbody targeting signal) with PEX5, monomeric form interacts with PEX5, leading to its translocation into peroxisomes. The cofactor is heme. Requires NADP(+) as cofactor.

The protein resides in the peroxisome matrix. The enzyme catalyses 2 H2O2 = O2 + 2 H2O. In terms of biological role, catalyzes the degradation of hydrogen peroxide (H(2)O(2)) generated by peroxisomal oxidases to water and oxygen, thereby protecting cells from the toxic effects of hydrogen peroxide. Promotes growth of cells including T-cells, B-cells, myeloid leukemia cells, melanoma cells, mastocytoma cells and normal and transformed fibroblast cells. In Sus scrofa (Pig), this protein is Catalase (CAT).